Here is a 378-residue protein sequence, read N- to C-terminus: Alpha-(1,3)-fucosyltransferase fut-5 (378 aa).

Residues 1-7 (MKHNTLR) are Cytoplasmic-facing. A helical; Signal-anchor for type II membrane protein membrane pass occupies residues 8 to 28 (AVFQFSFFIGICTFIMIAGYS). Residues 29 to 378 (YQINYNQRMG…CDNSFATRFL (350 aa)) lie on the Lumenal side of the membrane. N-linked (GlcNAc...) asparagine glycans are attached at residues N44, N88, N105, N143, N171, and N307.

Belongs to the glycosyltransferase 10 family. Ca(2+) is required as a cofactor. N-glycosylated.

Its subcellular location is the golgi apparatus. The protein resides in the golgi stack membrane. The catalysed reaction is a beta-D-galactosyl-(1-&gt;3)-N-acetyl-beta-D-glucosaminyl derivative + GDP-beta-L-fucose = a beta-D-galactosyl-(1-&gt;3)-[alpha-L-fucosyl-(1-&gt;4)]-N-acetyl-beta-D-glucosaminyl derivative + GDP + H(+). The protein operates within protein modification; protein glycosylation. Its activity is regulated as follows. Inhibited by Cu(2+) and Ni(2+), and to a lesser extent by EDTA, Mn(2+) and Mg(2+). Functionally, catalyzes the addition of fucose in alpha 1-3 linkage to GalNAc-beta-1-&gt;4-GlcNAc-beta-1-&gt;3-Gal-beta-1-&gt;4-Glc (LDNT)acceptor. Unlike fut-1, does not add fucose to Man-alpha-1-&gt;3-(Man-alpha-1-&gt;6)-Man-beta-1-&gt;4-GlcNAc-beta-1-&gt;4-GlcNAc-beta-1-Asn (M3), Man-alpha-1-&gt;3-(Man-alpha-1-&gt;6)-Man-beta-1-&gt;4-GlcNAc-beta-1-&gt;4-(Fuc-alpha-1-&gt;6)-GlcNAc-beta-1-Asn (M3F6) or GlcNAc-beta-1-&gt;2-Man-alpha-1-&gt;3-(GlcNAc-beta-1-&gt;2-Man-alpha-1-&gt;6)-Man-beta-1-4-GlcNAc-beta-1-&gt;4-(Fuc-alpha-1-&gt;6)-GlcNAc-beta-1-Asn (GnM3F6) acceptors. This chain is Alpha-(1,3)-fucosyltransferase fut-5, found in Caenorhabditis elegans.